The sequence spans 363 residues: Fructose-bisphosphate aldolase 1 (363 aa).

Position 34 (Asp34) interacts with dihydroxyacetone phosphate. Ser36 and Thr39 together coordinate D-glyceraldehyde 3-phosphate. Arg43 is a binding site for beta-D-fructose 1,6-bisphosphate. A D-glyceraldehyde 3-phosphate-binding site is contributed by Lys107. Lys146 serves as a coordination point for dihydroxyacetone phosphate. Glu189 lines the D-glyceraldehyde 3-phosphate pocket. The active-site Proton acceptor is the Glu189. Positions 231, 273, and 274 each coordinate dihydroxyacetone phosphate. The active-site Schiff-base intermediate with dihydroxyacetone phosphate is Lys231. Beta-D-fructose 1,6-bisphosphate-binding positions include 273-275 (SGG) and Ser301. Residues Gly303 and Arg304 each coordinate dihydroxyacetone phosphate. Arg304 contacts beta-D-fructose 1,6-bisphosphate.

The protein belongs to the class I fructose-bisphosphate aldolase family. In terms of assembly, homotetramer. Component of a complex, at least composed of ald-1, microneme protein MIC2 and ACT1. Interacts with microneme protein MIC2 (via cytoplasmic tail). Interacts with ACT1 (F-actin).

It is found in the cytoplasm. The enzyme catalyses beta-D-fructose 1,6-bisphosphate = D-glyceraldehyde 3-phosphate + dihydroxyacetone phosphate. It functions in the pathway carbohydrate degradation; glycolysis; D-glyceraldehyde 3-phosphate and glycerone phosphate from D-glucose: step 4/4. In terms of biological role, plays a key role in glycolysis by catalyzing the cleavage of fructose 1,6-bisphosphate into dihydroxyacetone phosphate and glyceraldehyde 3-phosphate. Forms a bridge between cell surface adhesins and the actin cytoskeleton. Required for parasite invasion of host cells. The polypeptide is Fructose-bisphosphate aldolase 1 (Toxoplasma gondii).